We begin with the raw amino-acid sequence, 546 residues long: Glucose-6-phosphate isomerase (546 aa).

Catalysis depends on Glu357, which acts as the Proton donor. Catalysis depends on residues His389 and Lys509.

It belongs to the GPI family.

Its subcellular location is the cytoplasm. The catalysed reaction is alpha-D-glucose 6-phosphate = beta-D-fructose 6-phosphate. Its pathway is carbohydrate biosynthesis; gluconeogenesis. The protein operates within carbohydrate degradation; glycolysis; D-glyceraldehyde 3-phosphate and glycerone phosphate from D-glucose: step 2/4. Its function is as follows. Catalyzes the reversible isomerization of glucose-6-phosphate to fructose-6-phosphate. In Anaeromyxobacter sp. (strain K), this protein is Glucose-6-phosphate isomerase.